The chain runs to 390 residues: Probable tRNA sulfurtransferase (390 aa).

One can recognise a THUMP domain in the interval 60–162 (KQIIDDLKEV…YDCAIVYGHK (103 aa)). Residues 180–181 (LL), 205–206 (TF), Arg264, Gly286, and Gln295 contribute to the ATP site.

It belongs to the ThiI family.

The protein resides in the cytoplasm. It catalyses the reaction [ThiI sulfur-carrier protein]-S-sulfanyl-L-cysteine + a uridine in tRNA + 2 reduced [2Fe-2S]-[ferredoxin] + ATP + H(+) = [ThiI sulfur-carrier protein]-L-cysteine + a 4-thiouridine in tRNA + 2 oxidized [2Fe-2S]-[ferredoxin] + AMP + diphosphate. The catalysed reaction is [ThiS sulfur-carrier protein]-C-terminal Gly-Gly-AMP + S-sulfanyl-L-cysteinyl-[cysteine desulfurase] + AH2 = [ThiS sulfur-carrier protein]-C-terminal-Gly-aminoethanethioate + L-cysteinyl-[cysteine desulfurase] + A + AMP + 2 H(+). Its pathway is cofactor biosynthesis; thiamine diphosphate biosynthesis. Functionally, catalyzes the ATP-dependent transfer of a sulfur to tRNA to produce 4-thiouridine in position 8 of tRNAs, which functions as a near-UV photosensor. Also catalyzes the transfer of sulfur to the sulfur carrier protein ThiS, forming ThiS-thiocarboxylate. This is a step in the synthesis of thiazole, in the thiamine biosynthesis pathway. The sulfur is donated as persulfide by IscS. The sequence is that of Probable tRNA sulfurtransferase from Ureaplasma parvum serovar 3 (strain ATCC 27815 / 27 / NCTC 11736).